Reading from the N-terminus, the 495-residue chain is Glutamyl-tRNA(Gln) amidotransferase subunit A (495 aa).

Catalysis depends on charge relay system residues Lys78 and Ser158. Ser182 serves as the catalytic Acyl-ester intermediate.

Belongs to the amidase family. GatA subfamily. Heterotrimer of A, B and C subunits.

The catalysed reaction is L-glutamyl-tRNA(Gln) + L-glutamine + ATP + H2O = L-glutaminyl-tRNA(Gln) + L-glutamate + ADP + phosphate + H(+). Allows the formation of correctly charged Gln-tRNA(Gln) through the transamidation of misacylated Glu-tRNA(Gln) in organisms which lack glutaminyl-tRNA synthetase. The reaction takes place in the presence of glutamine and ATP through an activated gamma-phospho-Glu-tRNA(Gln). The polypeptide is Glutamyl-tRNA(Gln) amidotransferase subunit A (Dinoroseobacter shibae (strain DSM 16493 / NCIMB 14021 / DFL 12)).